A 75-amino-acid chain; its full sequence is Exodeoxyribonuclease 7 small subunit (75 aa).

Belongs to the XseB family. As to quaternary structure, heterooligomer composed of large and small subunits.

Its subcellular location is the cytoplasm. It catalyses the reaction Exonucleolytic cleavage in either 5'- to 3'- or 3'- to 5'-direction to yield nucleoside 5'-phosphates.. Its function is as follows. Bidirectionally degrades single-stranded DNA into large acid-insoluble oligonucleotides, which are then degraded further into small acid-soluble oligonucleotides. This chain is Exodeoxyribonuclease 7 small subunit, found in Thermoanaerobacter sp. (strain X514).